We begin with the raw amino-acid sequence, 514 residues long: FAD-dependent monooxygenase AacuC (514 aa).

The disordered stretch occupies residues 1–29 (MVSNEYLTHGDKDEFDPAKWSSTPGELPP). The segment covering 8–17 (THGDKDEFDP) has biased composition (basic and acidic residues). Residues Val79 and Arg146 each coordinate FAD. Residue Arg227 is part of the active site. FAD contacts are provided by Asp358 and Gly371.

It belongs to the paxM FAD-dependent monooxygenase family. FAD serves as cofactor.

It participates in secondary metabolite biosynthesis. In terms of biological role, FAD-dependent monooxygenase; part of the gene cluster that mediates the biosynthesis of the tetrahydroxanthone dimer secalonic acid D. The pathway begins with the synthesis of atrochrysone thioester by the polyketide synthase AacuL. The atrochrysone carboxyl ACP thioesterase AacuM then breaks the thioester bond and releases the atrochrysone carboxylic acid from AacuL. Atrochrysone carboxylic acid is decarboxylated by the decarboxylase AacuI, and oxidized by the anthrone oxygenase AacuG to yield emodin. Emodin is then reduced to emodin hydroquinone by a yet unidentified oxidoreductase. A-ring reduction by the short chain dehydrogenase AacuN, dehydration by the scytalone dehydratase-like protein AacuK and probable spontaneous re-oxidation, results in overall deoxygenation to chrysophanol. Baeyer-Villiger oxidation by the Baeyer-Villiger monooxygenase (BVMO) AacuH then yields monodictyphenone. Monodictyphenone is transformed into compounds with the tetrahydroxanthone skeleton via methylesterification by the methyltransferase AacuQ, followed by the action of the flavin-dependent monooxygenase AacuC, the isomerase AacuP, and the short chain dehydrogenase/reductase AacuF or AacuD. AacuF and AacuD should accept the same compound as a substrate but perform the ketoreduction with a different stereoselectivity, thus yielding blennolides B and A, respectively. In the final step of the biosynthesis, the cytochrome P450 monooxygenase AacuE accepts blennolide B and/or blennolide A to conduct the dimerization reaction to furnish the tetrahydroxanthone dimers, secalonic acids D, B, and F. The sequence is that of FAD-dependent monooxygenase AacuC from Aspergillus aculeatus (strain ATCC 16872 / CBS 172.66 / WB 5094).